The primary structure comprises 202 residues: Recombination protein RecR (202 aa).

The C4-type zinc finger occupies 57-72; the sequence is CRDCRTFTEDDICAVC. The 96-residue stretch at 81–176 folds into the Toprim domain; that stretch reads GQICVVESPA…PATRIAHGVP (96 aa).

The protein belongs to the RecR family.

Its function is as follows. May play a role in DNA repair. It seems to be involved in an RecBC-independent recombinational process of DNA repair. It may act with RecF and RecO. This Photobacterium profundum (strain SS9) protein is Recombination protein RecR.